We begin with the raw amino-acid sequence, 105 residues long: Probable guanidinium efflux system subunit GdnD (105 aa).

4 consecutive transmembrane segments (helical) span residues 1-21 (MLHW…VALM), 32-52 (WVLL…YAME), 59-79 (AYAV…ILFY), and 85-105 (AKRI…KILS).

The protein belongs to the drug/metabolite transporter (DMT) superfamily. Small multidrug resistance (SMR) (TC 2.A.7.1) family. YkkC/YkkD subfamily. In terms of assembly, the efflux pump is composed of GdnC and GdnD.

It is found in the cell membrane. In terms of biological role, probably involved in guanidinium transport. In vitro, confers resistance to a broad range of toxic compounds such as cationic dyes, neutral and anionic antimicrobials. The chain is Probable guanidinium efflux system subunit GdnD from Bacillus subtilis (strain 168).